Reading from the N-terminus, the 230-residue chain is Flagellar L-ring protein (230 aa).

Residues 1 to 15 (MSRLPSLSSLCLAIA) form the signal peptide. The N-palmitoyl cysteine moiety is linked to residue Cys16. The S-diacylglycerol cysteine moiety is linked to residue Cys16.

It belongs to the FlgH family. The basal body constitutes a major portion of the flagellar organelle and consists of four rings (L,P,S, and M) mounted on a central rod.

Its subcellular location is the cell outer membrane. It is found in the bacterial flagellum basal body. Assembles around the rod to form the L-ring and probably protects the motor/basal body from shearing forces during rotation. The protein is Flagellar L-ring protein of Xanthomonas campestris pv. campestris (strain 8004).